The sequence spans 261 residues: Proteasome subunit alpha type-4 (261 aa).

Phosphoserine is present on residues serine 13 and serine 75. Lysine 127 is modified (N6-acetyllysine). At serine 173 the chain carries Phosphoserine. At lysine 176 the chain carries N6-acetyllysine. A disordered region spans residues 240–261 (HEEEEAKAEREKKEKEQREKDK).

It belongs to the peptidase T1A family. The 26S proteasome consists of a 20S proteasome core and two 19S regulatory subunits. The 20S proteasome core is a barrel-shaped complex made of 28 subunits that are arranged in four stacked rings. The two outer rings are each formed by seven alpha subunits, and the two inner rings are formed by seven beta subunits. The proteolytic activity is exerted by three beta-subunits PSMB5, PSMB6 and PSMB7. In terms of tissue distribution, ubiquitous.

The protein localises to the cytoplasm. The protein resides in the nucleus. In terms of biological role, component of the 20S core proteasome complex involved in the proteolytic degradation of most intracellular proteins. This complex plays numerous essential roles within the cell by associating with different regulatory particles. Associated with two 19S regulatory particles, forms the 26S proteasome and thus participates in the ATP-dependent degradation of ubiquitinated proteins. The 26S proteasome plays a key role in the maintenance of protein homeostasis by removing misfolded or damaged proteins that could impair cellular functions, and by removing proteins whose functions are no longer required. Associated with the PA200 or PA28, the 20S proteasome mediates ubiquitin-independent protein degradation. This type of proteolysis is required in several pathways including spermatogenesis (20S-PA200 complex) or generation of a subset of MHC class I-presented antigenic peptides (20S-PA28 complex). The polypeptide is Proteasome subunit alpha type-4 (Psma4) (Rattus norvegicus (Rat)).